Reading from the N-terminus, the 102-residue chain is MTLTLGHFLSLGAMLFALSVIGIFLNRKNLIVLLMAIELMLLAVNMNFVAFSHYLGDMHGQVFVFFILTVAAAESAIGLAILVLLFRNKSSIDAEDLNTLKG.

A run of 3 helical transmembrane segments spans residues leucine 5–leucine 25, isoleucine 31–phenylalanine 51, and valine 62–leucine 82.

The protein belongs to the complex I subunit 4L family. In terms of assembly, NDH-1 is composed of 14 different subunits. Subunits NuoA, H, J, K, L, M, N constitute the membrane sector of the complex.

The protein localises to the cell inner membrane. The catalysed reaction is a quinone + NADH + 5 H(+)(in) = a quinol + NAD(+) + 4 H(+)(out). Functionally, NDH-1 shuttles electrons from NADH, via FMN and iron-sulfur (Fe-S) centers, to quinones in the respiratory chain. The immediate electron acceptor for the enzyme in this species is believed to be ubiquinone. Couples the redox reaction to proton translocation (for every two electrons transferred, four hydrogen ions are translocated across the cytoplasmic membrane), and thus conserves the redox energy in a proton gradient. The sequence is that of NADH-quinone oxidoreductase subunit K from Paracidovorax citrulli (strain AAC00-1) (Acidovorax citrulli).